Here is a 74-residue protein sequence, read N- to C-terminus: Brevinin-2MT1 (74 aa).

An N-terminal signal peptide occupies residues methionine 1 to cysteine 22. The propeptide at glutamate 23–glutamate 39 is removed in mature form. Cysteine 68 and cysteine 74 are disulfide-bonded.

The protein belongs to the frog skin active peptide (FSAP) family. Brevinin subfamily. In terms of tissue distribution, expressed by the skin glands.

It is found in the secreted. In terms of biological role, antimicrobial peptide. Active against a variety of Gram-negative and Gram-positive bacterial strains. Active against fungi. Shows hemolytic activity against human erythrocytes. This is Brevinin-2MT1 from Amolops mantzorum (Sichuan torrent frog).